Here is a 273-residue protein sequence, read N- to C-terminus: Homeobox protein Nkx-2.2 (273 aa).

2 disordered regions span residues 1–56 and 91–131; these read MSLT…LDAV and AASA…KRKR. Residues 20 to 38 are compositionally biased toward acidic residues; the sequence is DTNDEDGSVAEGPEEESEG. A DNA-binding region (homeobox) is located at residues 128–187; the sequence is KRKRRVLFSKAQTYELERRFRQQRYLSAPEREHLASLIRLTPTQVKIWFQNHRYKMKRAR.

It belongs to the NK-2 homeobox family. As to quaternary structure, interacts with OLIG2. As to expression, expressed in restricted areas of the developing CNS: the hindbrain and forebrain, and pancreas.

The protein resides in the nucleus. Transcriptional activator involved in the development of insulin-producting beta cells in the endocrine pancreas. May also be involved in specifying diencephalic neuromeric boundaries, and in controlling the expression of genes that play a role in axonal guidance. Binds to elements within the NEUROD1 promoter. This is Homeobox protein Nkx-2.2 (Nkx2-2) from Mus musculus (Mouse).